A 448-amino-acid chain; its full sequence is Signal recognition particle protein (448 aa).

GTP contacts are provided by residues 101-108 (GLQGSGKT), 182-186 (DSAGR), and 240-243 (SKFD).

This sequence belongs to the GTP-binding SRP family. SRP54 subfamily. As to quaternary structure, part of the signal recognition particle protein translocation system, which is composed of SRP and FtsY. SRP is a ribonucleoprotein composed of Ffh and a 4.5S RNA molecule.

The protein resides in the cytoplasm. The enzyme catalyses GTP + H2O = GDP + phosphate + H(+). Its function is as follows. Involved in targeting and insertion of nascent membrane proteins into the cytoplasmic membrane. Binds to the hydrophobic signal sequence of the ribosome-nascent chain (RNC) as it emerges from the ribosomes. The SRP-RNC complex is then targeted to the cytoplasmic membrane where it interacts with the SRP receptor FtsY. Interaction with FtsY leads to the transfer of the RNC complex to the Sec translocase for insertion into the membrane, the hydrolysis of GTP by both Ffh and FtsY, and the dissociation of the SRP-FtsY complex into the individual components. This is Signal recognition particle protein from Helicobacter pylori (strain ATCC 700392 / 26695) (Campylobacter pylori).